The sequence spans 68 residues: Small integral membrane protein 45 (68 aa).

Residues 7-27 traverse the membrane as a helical segment; that stretch reads WFVPVYLVISVLILVGFGACI.

Highly expressed in brain.

The protein localises to the nucleus. It localises to the cytoplasm. It is found in the membrane. Plays a role in the regulation of neuron maturation. This is Small integral membrane protein 45 from Homo sapiens (Human).